A 437-amino-acid polypeptide reads, in one-letter code: GTPase Obg (437 aa).

The region spanning 2–160 (SLFLDTARIE…KILLLELRVL (159 aa)) is the Obg domain. In terms of domain architecture, OBG-type G spans 161–338 (ADVGLVGFPS…LLARTSELLA (178 aa)). GTP is bound by residues 167–174 (GFPSVGKS), 192–196 (FTTIT), 214–217 (DMPG), 284–287 (NKMD), and 319–321 (SGL). Mg(2+) contacts are provided by S174 and T194. Residues 359-437 (GFEEEEKPFK…IQKFEFEFVD (79 aa)) enclose the OCT domain.

The protein belongs to the TRAFAC class OBG-HflX-like GTPase superfamily. OBG GTPase family. In terms of assembly, monomer. Mg(2+) is required as a cofactor.

It is found in the cytoplasm. In terms of biological role, an essential GTPase which binds GTP, GDP and possibly (p)ppGpp with moderate affinity, with high nucleotide exchange rates and a fairly low GTP hydrolysis rate. Plays a role in control of the cell cycle, stress response, ribosome biogenesis and in those bacteria that undergo differentiation, in morphogenesis control. This chain is GTPase Obg, found in Lactococcus lactis subsp. lactis (strain IL1403) (Streptococcus lactis).